The chain runs to 89 residues: Small ribosomal subunit protein uS15 (89 aa).

The protein belongs to the universal ribosomal protein uS15 family. In terms of assembly, part of the 30S ribosomal subunit. Forms a bridge to the 50S subunit in the 70S ribosome, contacting the 23S rRNA.

Its function is as follows. One of the primary rRNA binding proteins, it binds directly to 16S rRNA where it helps nucleate assembly of the platform of the 30S subunit by binding and bridging several RNA helices of the 16S rRNA. In terms of biological role, forms an intersubunit bridge (bridge B4) with the 23S rRNA of the 50S subunit in the ribosome. In Trichodesmium erythraeum (strain IMS101), this protein is Small ribosomal subunit protein uS15.